Consider the following 198-residue polypeptide: ATP synthase protein MI25 (198 aa).

The chain crosses the membrane as a helical span at residues 29–49 (ISIYNEEMIVALCFIGFIIFS).

Belongs to the ATPase protein MI25 family. As to quaternary structure, F-type ATPases have 2 components, CF(1) - the catalytic core - and CF(0) - the membrane proton channel. CF(1) has five subunits: alpha(3), beta(3), gamma(1), delta(1), epsilon(1). CF(0) has three main subunits: a, b and c.

Its subcellular location is the mitochondrion membrane. Functionally, this is one of the chains of the nonenzymatic component (CF(0) subunit) of the mitochondrial ATPase complex. This Nicotiana tabacum (Common tobacco) protein is ATP synthase protein MI25.